The sequence spans 48 residues: Cathepsin B (48 aa).

This sequence belongs to the peptidase C1 family. Dimer of a heavy chain and a light chain cross-linked by a disulfide bond.

Its subcellular location is the lysosome. The enzyme catalyses Hydrolysis of proteins with broad specificity for peptide bonds. Preferentially cleaves -Arg-Arg-|-Xaa bonds in small molecule substrates (thus differing from cathepsin L). In addition to being an endopeptidase, shows peptidyl-dipeptidase activity, liberating C-terminal dipeptides.. Functionally, thiol protease which is believed to participate in intracellular degradation and turnover of proteins. Has also been implicated in tumor invasion and metastasis. This is Cathepsin B (CTSB) from Coturnix japonica (Japanese quail).